A 720-amino-acid chain; its full sequence is Inactive serine protease PAMR1 (720 aa).

Positions 1–21 (MELGCWTQLGLTFLQLLLISS) are cleaved as a signal peptide. Intrachain disulfides connect C128-C150, C177-C199, C239-C250, C244-C260, C262-C271, C280-C329, C315-C342, and C414-C442. One can recognise a CUB domain in the interval 128–236 (CGQVLRAPKG…DGFHAIFEEI (109 aa)). The region spanning 235–272 (EITACSSSPCFHDGTCVLDKAGSYKCACLAGYTGQRCE) is the EGF-like domain. 2 Sushi domains span residues 278–344 (RNCS…ICIK) and 387–444 (APTK…SCIP). Residues 445-720 (ICGKIENVTA…FKDWIERNMK (276 aa)) enclose the Peptidase S1 domain. Residue N451 is glycosylated (N-linked (GlcNAc...) asparagine). C489 and C505 form a disulfide bridge. N614 carries an N-linked (GlcNAc...) asparagine glycan. Cystine bridges form between C630/C649 and C661/C697.

Belongs to the peptidase S1 family.

Its subcellular location is the secreted. May play a role in regeneration of skeletal muscle. The sequence is that of Inactive serine protease PAMR1 (PAMR1) from Pongo abelii (Sumatran orangutan).